The primary structure comprises 696 residues: Polyribonucleotide nucleotidyltransferase (696 aa).

Mg(2+) is bound by residues Asp483 and Asp489. Positions 550 to 609 (PRITTIYVKTDKIRDVIGSGGKNIRGITEATGVTIDIDDTGKINIASTDKAACDMAIKMI) constitute a KH domain. The 69-residue stretch at 619 to 687 (GKLYMGLVKK…KQGKIKLSRK (69 aa)) folds into the S1 motif domain.

The protein belongs to the polyribonucleotide nucleotidyltransferase family. Mg(2+) serves as cofactor.

It localises to the cytoplasm. The catalysed reaction is RNA(n+1) + phosphate = RNA(n) + a ribonucleoside 5'-diphosphate. Involved in mRNA degradation. Catalyzes the phosphorolysis of single-stranded polyribonucleotides processively in the 3'- to 5'-direction. In Geotalea daltonii (strain DSM 22248 / JCM 15807 / FRC-32) (Geobacter daltonii), this protein is Polyribonucleotide nucleotidyltransferase.